Reading from the N-terminus, the 38-residue chain is Large ribosomal subunit protein bL36 (38 aa).

It belongs to the bacterial ribosomal protein bL36 family.

The chain is Large ribosomal subunit protein bL36 from Synechococcus sp. (strain JA-2-3B'a(2-13)) (Cyanobacteria bacterium Yellowstone B-Prime).